A 185-amino-acid chain; its full sequence is UPF0200 protein TK1334 (185 aa).

7–14 (GMPGSGKS) lines the ATP pocket.

It belongs to the UPF0200 family.

This is UPF0200 protein TK1334 from Thermococcus kodakarensis (strain ATCC BAA-918 / JCM 12380 / KOD1) (Pyrococcus kodakaraensis (strain KOD1)).